The chain runs to 86 residues: DNA-directed RNA polymerase subunit omega (86 aa).

This sequence belongs to the RNA polymerase subunit omega family. The RNAP catalytic core consists of 2 alpha, 1 beta, 1 beta' and 1 omega subunit. When a sigma factor is associated with the core the holoenzyme is formed, which can initiate transcription.

It catalyses the reaction RNA(n) + a ribonucleoside 5'-triphosphate = RNA(n+1) + diphosphate. Its function is as follows. Promotes RNA polymerase assembly. Latches the N- and C-terminal regions of the beta' subunit thereby facilitating its interaction with the beta and alpha subunits. This Psychrobacter arcticus (strain DSM 17307 / VKM B-2377 / 273-4) protein is DNA-directed RNA polymerase subunit omega.